A 120-amino-acid chain; its full sequence is NAD(P)H-quinone oxidoreductase subunit 3, chloroplastic (120 aa).

Helical transmembrane passes span 9-29 (IFWA…LISG), 64-84 (MFAL…PWAM), and 88-108 (VLGV…ILGL).

This sequence belongs to the complex I subunit 3 family. NDH is composed of at least 16 different subunits, 5 of which are encoded in the nucleus.

It localises to the plastid. It is found in the chloroplast thylakoid membrane. It carries out the reaction a plastoquinone + NADH + (n+1) H(+)(in) = a plastoquinol + NAD(+) + n H(+)(out). It catalyses the reaction a plastoquinone + NADPH + (n+1) H(+)(in) = a plastoquinol + NADP(+) + n H(+)(out). In terms of biological role, NDH shuttles electrons from NAD(P)H:plastoquinone, via FMN and iron-sulfur (Fe-S) centers, to quinones in the photosynthetic chain and possibly in a chloroplast respiratory chain. The immediate electron acceptor for the enzyme in this species is believed to be plastoquinone. Couples the redox reaction to proton translocation, and thus conserves the redox energy in a proton gradient. The chain is NAD(P)H-quinone oxidoreductase subunit 3, chloroplastic from Draba nemorosa (Woodland whitlowgrass).